The chain runs to 464 residues: Lysosomal proton-coupled steroid conjugate and bile acid symporter SLC46A3 (464 aa).

The N-terminal stretch at 1-26 (MRKVLLVEPVIFIYIFASSLTSPVVQ) is a signal peptide. Residues 27–71 (QFIYRKLWEEEYNSTAISSDNSSHCERNKSSPTYVMEKAIQEKTS) lie on the Extracellular side of the membrane. N-linked (GlcNAc...) asparagine glycosylation is found at N39, N47, and N54. A helical membrane pass occupies residues 72–92 (FFNMQLDLTGAVPSLIVAFII). The Cytoplasmic portion of the chain corresponds to 93 to 104 (VANGDHQGRKKS). A helical membrane pass occupies residues 105–125 (LVLPSIGALIADIFLTIVSYF). Topologically, residues 126–130 (SWPTS) are extracellular. The chain crosses the membrane as a helical span at residues 131 to 151 (VLFLATFISGLFGSMATFLGG). The Cytoplasmic portion of the chain corresponds to 152–171 (GFAYIADQCHDEKQKTTRIA). A helical transmembrane segment spans residues 172–192 (VIDLIFGVVSGLAGLSSGYFL). Residues 193–198 (REMGFT) are Extracellular-facing. The chain crosses the membrane as a helical span at residues 199–219 (WTFATASLLHVVNIIYITFFL). The Cytoplasmic segment spans residues 220 to 259 (QDTVHISEFQQQAPLSYKEHLKETFSGVYMLFKTAPSKKR). A helical transmembrane segment spans residues 260–280 (ILIIVLLFIFMTYLFTMFGGS). Over 281-296 (SLFTLYELDEPLCWTE) the chain is Extracellular. The chain crosses the membrane as a helical span at residues 297–317 (VYIGYGAAAFTSISLTSFLGV). Topologically, residues 318–326 (YLFSKCLKD) are cytoplasmic. A helical transmembrane segment spans residues 327–347 (IYIVFIGIFSYIGGIVMAAFA). At 348-349 (KT) the chain is on the extracellular side. Residues 350-370 (TLLMFLVRVPSLFSIMPIPVL) traverse the membrane as a helical segment. Residues 371-384 (RSMLSKVVLPSEQG) lie on the Cytoplasmic side of the membrane. A helical membrane pass occupies residues 385–405 (AVFACIACLEVLTGTISLSVF). At 406 to 418 (NVIYAATVAWFSG) the chain is on the extracellular side. The chain crosses the membrane as a helical span at residues 419 to 439 (FSFLLSASLCLIPLGVLCWLL). At 440–464 (CTSWNGEDLALLVPEEVSSIDSVDS) the chain is on the cytoplasmic side.

This sequence belongs to the major facilitator superfamily. SLC46A family.

Its subcellular location is the lysosome membrane. It carries out the reaction estrone 3-sulfate(out) + n H(+)(out) = estrone 3-sulfate(in) + n H(+)(in). The catalysed reaction is 25-hydroxyvitamin D3 sulfate(out) + n H(+)(out) = 25-hydroxyvitamin D3 sulfate(in) + n H(+)(in). It catalyses the reaction cholate(out) + n H(+)(out) = cholate(in) + n H(+)(in). The enzyme catalyses glycocholate(out) + n H(+)(out) = glycocholate(in) + n H(+)(in). It carries out the reaction taurocholate(out) + n H(+)(out) = taurocholate(in) + n H(+)(in). The catalysed reaction is dehydroepiandrosterone 3-sulfate(out) + n H(+)(out) = dehydroepiandrosterone 3-sulfate(in) + n H(+)(in). Lysosomal proton-coupled steroid conjugate and bile acid transporter. Preferentially recognizes lipophilic steroid conjugates or bile acis as endogenous substrates and seems to mediate escape from lysosomes to the cytoplasm. Modulates hepatic cytosolic copper homeostasis, maybe acting as a lysosomal copper transporter and sequestering copper ions in the lysosome. The sequence is that of Lysosomal proton-coupled steroid conjugate and bile acid symporter SLC46A3 (SLC46A3) from Gallus gallus (Chicken).